We begin with the raw amino-acid sequence, 164 residues long: Rhomboid-related protein 1 (164 aa).

Helical transmembrane passes span 10–30 (GFNALLQLMIGVPLEMVHGVL), 32–52 (ISLLYLAGVLAGSLTVSITDM), 56–76 (VVGGSGGVYALCSAHLANVVM), and 120–140 (PSFMAHLAGAVVGVSMGLTIL). Residue S60 is the Nucleophile of the active site. H125 is a catalytic residue.

The protein belongs to the peptidase S54 family.

It is found in the membrane. It carries out the reaction Cleaves type-1 transmembrane domains using a catalytic dyad composed of serine and histidine that are contributed by different transmembrane domains.. May be involved in regulated intramembrane proteolysis and the subsequent release of functional polypeptides from their membrane anchors. The protein is Rhomboid-related protein 1 (Rhbdl1) of Rattus norvegicus (Rat).